The following is a 64-amino-acid chain: Ferredoxin-like protein in nif region (64 aa).

The region spanning 2–30 is the 4Fe-4S ferredoxin-type domain; it reads AFKIIASQCTQCGACEFECPSNAIELKGE. Cys-10, Cys-13, Cys-16, Cys-20, Cys-39, Cys-42, Cys-51, and Cys-55 together coordinate [4Fe-4S] cluster.

The cofactor is [4Fe-4S] cluster.

This is Ferredoxin-like protein in nif region (fdxN) from Sinorhizobium fredii (strain NBRC 101917 / NGR234).